Here is a 189-residue protein sequence, read N- to C-terminus: Receptor activity-modifying protein 2 (189 aa).

An N-terminal signal peptide occupies residues 1–44 (MAPLRVERAPGGSRLGVTRAQRPTALCLPPLLLLLLLLLGAVSA). Residues 45–157 (SPESLNQSLP…VQPTFSDPPE (113 aa)) are Extracellular-facing. A compositionally biased stretch (polar residues) spans 49 to 61 (LNQSLPESQNQSH). Residues 49–69 (LNQSLPESQNQSHPTEDSLVS) form a disordered region. 4 N-linked (GlcNAc...) asparagine glycosylation sites follow: asparagine 50, asparagine 58, asparagine 99, and asparagine 144. Disulfide bonds link cysteine 83/cysteine 113 and cysteine 98/cysteine 145. The helical transmembrane segment at 158-179 (DVLLAMIIAPICLIPFLVTLVV) threads the bilayer. The Cytoplasmic portion of the chain corresponds to 180–189 (WRSKDSDAQA).

Belongs to the RAMP family. As to quaternary structure, heterodimer of CALCRL and RAMP2; the interaction forms the receptor complex for adrenomedullin/ADM. Heterodimer of CALCR and RAMP2; interaction forms the AMYR2 receptor complex for calcitonin/CALC and amylin/IAPP. Ubiquitous. Expressed predominantly in embryonic brain, lung and gut and in adult heart, lung, skeletal muscle and brain.

It is found in the cell membrane. Functionally, accessory protein that interacts with and modulates the function of G-protein coupled receptors including calcitonin gene-related peptide type 1 receptor (CALCRL) and calcitonin receptor (CALCR). Required for the transport of CALCRL to the plasma membrane. Together with CALCRL, form a receptor complex for adrenomedullin/ADM. Together with CALCR, act as a receptor complex for calcitonin/CT/CALC. Together with CALCR, also act as a receptor complex for amylin/IAPP. This Mus musculus (Mouse) protein is Receptor activity-modifying protein 2.